Consider the following 684-residue polypeptide: Pentatricopeptide repeat-containing protein At4g14850 (684 aa).

PPR repeat units lie at residues 5-39, 41-71, 72-106, 107-141, 142-172, 173-207, 208-242, 243-277, 278-308, 309-343, 344-374, 375-409, 412-442, and 448-478; these read SADA…LDSP, PPFL…TPAR, NVVS…GVVP, NDFT…GRIL, DVFV…IPER, NLET…DGHP, NSIT…GFDT, DVSV…NAVS, WCSL…IVET, SDFM…CVER, TIFV…MPEK, NLVT…GCGP, NYMT…MRST, and GAEH…MPIQ. Positions 483 to 558 are type E motif; degenerate; sequence VWGALQNACR…GAGYSWITVK (76 aa). Residues 559–589 form a type E(+) motif; degenerate region; the sequence is NQVHAFQAKDRSHILNKEIQTTLAKLRNEME. A type DYW motif region spans residues 590 to 684; it reads AAGYKPDLKL…DGICSCKDYW (95 aa).

Belongs to the PPR family. PCMP-H subfamily.

In terms of biological role, acts as a regulatory factor of isoprenoid biosynthesis. Could bind RNA. The sequence is that of Pentatricopeptide repeat-containing protein At4g14850 (LOI1) from Arabidopsis thaliana (Mouse-ear cress).